The sequence spans 156 residues: Small ribosomal subunit protein uS7 (156 aa).

It belongs to the universal ribosomal protein uS7 family. As to quaternary structure, part of the 30S ribosomal subunit. Contacts proteins S9 and S11.

Its function is as follows. One of the primary rRNA binding proteins, it binds directly to 16S rRNA where it nucleates assembly of the head domain of the 30S subunit. Is located at the subunit interface close to the decoding center, probably blocks exit of the E-site tRNA. The chain is Small ribosomal subunit protein uS7 from Hahella chejuensis (strain KCTC 2396).